A 339-amino-acid polypeptide reads, in one-letter code: Ribosomal RNA small subunit methyltransferase C (339 aa).

Belongs to the methyltransferase superfamily. RsmC family. As to quaternary structure, monomer.

It localises to the cytoplasm. It catalyses the reaction guanosine(1207) in 16S rRNA + S-adenosyl-L-methionine = N(2)-methylguanosine(1207) in 16S rRNA + S-adenosyl-L-homocysteine + H(+). In terms of biological role, specifically methylates the guanine in position 1207 of 16S rRNA in the 30S particle. The protein is Ribosomal RNA small subunit methyltransferase C of Aliivibrio fischeri (strain ATCC 700601 / ES114) (Vibrio fischeri).